The following is a 37-amino-acid chain: Kappa-actitoxin-Bgr1a (37 aa).

The region spanning 2–37 (CRDWFKETACRHAKSLGNCRTSQKYRANCAKTCELC) is the ShKT domain. 3 disulfide bridges follow: Cys-2–Cys-37, Cys-11–Cys-30, and Cys-20–Cys-34. The interval 25–26 (KY) is crucial for binding to potassium channels.

This sequence belongs to the sea anemone type 1 potassium channel toxin family. Type 1b subfamily.

The protein localises to the secreted. Its subcellular location is the nematocyst. Its function is as follows. Inhibits voltage-dependent potassium channels of the Kv1 family (Kv1.1/KCNA1 (Kd=6 nM), Kv1.2/KCNA2 (Kd=15 nM), Kv1.3/KCNA3 (Kd=10-39 nM), Kv1.6/KCNA6, and KCa3.1/KCNN4 (Kd=172 nM)). The polypeptide is Kappa-actitoxin-Bgr1a (Bunodosoma granuliferum (Red warty sea anemone)).